We begin with the raw amino-acid sequence, 250 residues long: DNA polymerase sliding clamp (250 aa).

The protein belongs to the PCNA family. In terms of assembly, homotrimer. The subunits circularize to form a toroid; DNA passes through its center. Replication factor C (RFC) is required to load the toroid on the DNA.

Its function is as follows. Sliding clamp subunit that acts as a moving platform for DNA processing. Responsible for tethering the catalytic subunit of DNA polymerase and other proteins to DNA during high-speed replication. The protein is DNA polymerase sliding clamp of Methanococcus maripaludis (strain C5 / ATCC BAA-1333).